A 93-amino-acid polypeptide reads, in one-letter code: DNA-binding protein Fis (93 aa).

Positions 74 to 93 (QTRAALMMGINRGTLRKKLK) form a DNA-binding region, H-T-H motif.

It belongs to the transcriptional regulatory Fis family. As to quaternary structure, homodimer.

Its function is as follows. Activates ribosomal RNA transcription. Plays a direct role in upstream activation of rRNA promoters. The polypeptide is DNA-binding protein Fis (Klebsiella pneumoniae).